A 166-amino-acid chain; its full sequence is Small ribosomal subunit protein uS5 (166 aa).

An S5 DRBM domain is found at leucine 11–isoleucine 74.

It belongs to the universal ribosomal protein uS5 family. Part of the 30S ribosomal subunit. Contacts proteins S4 and S8.

Functionally, with S4 and S12 plays an important role in translational accuracy. Its function is as follows. Located at the back of the 30S subunit body where it stabilizes the conformation of the head with respect to the body. The polypeptide is Small ribosomal subunit protein uS5 (Aliivibrio salmonicida (strain LFI1238) (Vibrio salmonicida (strain LFI1238))).